The sequence spans 615 residues: Dihydroxy-acid dehydratase (615 aa).

Aspartate 81 provides a ligand contact to Mg(2+). Cysteine 122 contacts [2Fe-2S] cluster. Residues aspartate 123 and lysine 124 each coordinate Mg(2+). Lysine 124 carries the N6-carboxylysine modification. Cysteine 195 provides a ligand contact to [2Fe-2S] cluster. Residue glutamate 491 participates in Mg(2+) binding. Serine 517 serves as the catalytic Proton acceptor.

Belongs to the IlvD/Edd family. Homodimer. [2Fe-2S] cluster is required as a cofactor. The cofactor is Mg(2+).

The enzyme catalyses (2R)-2,3-dihydroxy-3-methylbutanoate = 3-methyl-2-oxobutanoate + H2O. It catalyses the reaction (2R,3R)-2,3-dihydroxy-3-methylpentanoate = (S)-3-methyl-2-oxopentanoate + H2O. It functions in the pathway amino-acid biosynthesis; L-isoleucine biosynthesis; L-isoleucine from 2-oxobutanoate: step 3/4. Its pathway is amino-acid biosynthesis; L-valine biosynthesis; L-valine from pyruvate: step 3/4. In terms of biological role, functions in the biosynthesis of branched-chain amino acids. Catalyzes the dehydration of (2R,3R)-2,3-dihydroxy-3-methylpentanoate (2,3-dihydroxy-3-methylvalerate) into 2-oxo-3-methylpentanoate (2-oxo-3-methylvalerate) and of (2R)-2,3-dihydroxy-3-methylbutanoate (2,3-dihydroxyisovalerate) into 2-oxo-3-methylbutanoate (2-oxoisovalerate), the penultimate precursor to L-isoleucine and L-valine, respectively. The sequence is that of Dihydroxy-acid dehydratase from Pseudoalteromonas atlantica (strain T6c / ATCC BAA-1087).